Here is a 213-residue protein sequence, read N- to C-terminus: Regulatory protein RecX (213 aa).

This sequence belongs to the RecX family.

It is found in the cytoplasm. Functionally, modulates RecA activity. The protein is Regulatory protein RecX of Clostridium beijerinckii (strain ATCC 51743 / NCIMB 8052) (Clostridium acetobutylicum).